An 81-amino-acid polypeptide reads, in one-letter code: Protein L83L (81 aa).

The disordered stretch occupies residues 1–28 (MDTSLKNNDGALEADNKNYQDYKDEPDK). Residues 14 to 28 (ADNKNYQDYKDEPDK) are compositionally biased toward basic and acidic residues.

This sequence belongs to the asfivirus L83L family. Interacts with host IL1B.

The protein localises to the host cytoplasm. Its function is as follows. May subvert the host innate immune response by interacting with host IL1B and interfering with its function. The chain is Protein L83L from Ornithodoros (relapsing fever ticks).